The sequence spans 429 residues: SET domain-containing protein 8 (429 aa).

The 216-residue stretch at Lys-17–Gly-232 folds into the SET domain.

Belongs to the class V-like SAM-binding methyltransferase superfamily.

The protein resides in the cytoplasm. Its subcellular location is the nucleus. The polypeptide is SET domain-containing protein 8 (set8) (Schizosaccharomyces pombe (strain 972 / ATCC 24843) (Fission yeast)).